A 151-amino-acid chain; its full sequence is 3-dehydroquinate dehydratase (151 aa).

Catalysis depends on tyrosine 26, which acts as the Proton acceptor. 3 residues coordinate substrate: asparagine 75, histidine 81, and aspartate 88. Histidine 101 serves as the catalytic Proton donor. Substrate-binding positions include 102 to 103 (LS) and arginine 112.

This sequence belongs to the type-II 3-dehydroquinase family. As to quaternary structure, homododecamer.

It carries out the reaction 3-dehydroquinate = 3-dehydroshikimate + H2O. Its pathway is metabolic intermediate biosynthesis; chorismate biosynthesis; chorismate from D-erythrose 4-phosphate and phosphoenolpyruvate: step 3/7. Its function is as follows. Catalyzes a trans-dehydration via an enolate intermediate. This chain is 3-dehydroquinate dehydratase, found in Shewanella sediminis (strain HAW-EB3).